The chain runs to 205 residues: H/ACA ribonucleoprotein complex subunit GAR1 (205 aa).

The segment covering 1–23 (MSFRGGNRGGRGGFRGGFRGGRT) has biased composition (gly residues). The segment at 1–31 (MSFRGGNRGGRGGFRGGFRGGRTGSARSFQQ) is disordered. Arg4 carries the post-translational modification Asymmetric dimethylarginine; by HMT1. Residues 4-21 (RGGNRGGRGGFRGGFRGG) are RGG-box 1. At Arg8 the chain carries Asymmetric dimethylarginine; by HMT1; alternate. Arg8 carries the omega-N-methylarginine; by HMT1; alternate modification. The residue at position 11 (Arg11) is an Asymmetric dimethylarginine; by HMT1. Residue Arg15 is modified to Asymmetric dimethylarginine; by HMT1; alternate. An Omega-N-methylarginine; by HMT1; alternate modification is found at Arg15. Position 19 is an asymmetric dimethylarginine; by HMT1 (Arg19). A Glycyl lysine isopeptide (Lys-Gly) (interchain with G-Cter in ubiquitin) cross-link involves residue Lys77. The interval 124-205 (PKPKVVGPPK…SRGGFRGGRR (82 aa)) is disordered. Residues 143 to 205 (APGGRGGASM…SRGGFRGGRR (63 aa)) show a composition bias toward gly residues. An asymmetric dimethylarginine; by HMT1; alternate mark is found at Arg147, Arg154, and Arg158. Arg147, Arg154, and Arg158 each carry omega-N-methylarginine; by HMT1; alternate. The interval 147–205 (RGGASMGRGGSRGGFRGGRGGSSFRGGRGGSSFRGGSRGGSFRGGSRGGSRGGFRGGRR) is RGG-box 2. Position 162 is an asymmetric dimethylarginine; by HMT1 (Arg162). Arg165 is modified (asymmetric dimethylarginine; by HMT1; alternate). Arg165 bears the Omega-N-methylarginine; by HMT1; alternate mark. Asymmetric dimethylarginine; by HMT1 occurs at positions 171 and 174. Residues Arg180 and Arg184 each carry the omega-N-methylarginine; by HMT1 modification. Arg189 carries the post-translational modification Asymmetric dimethylarginine; by HMT1; alternate. Arg189 bears the Omega-N-methylarginine; by HMT1; alternate mark. Residues Arg193, Arg197, and Arg201 each carry the asymmetric dimethylarginine; by HMT1 modification.

It belongs to the GAR1 family. In terms of assembly, component of the small nucleolar ribonucleoprotein particles containing H/ACA-type snoRNAs (H/ACA snoRNPs). The protein component of the H/ACA snoRNP contains CBF5, GAR1, NHP2 and NOP10. The complex contains a stable core composed of CBF5 and NOP10, to which GAR1 and NHP2 subsequently bind. Interacts with snoRNAs. In terms of processing, methylated by HMT1, forming asymmetric dimethylarginines (DMA) within a domain referred to as an RGG box, made up of repeated Gly-Gly dipeptides interspersed with Arg and aromatic residues.

Its subcellular location is the nucleus. The protein localises to the nucleolus. Non-catalytic component of the H/ACA small nucleolar ribonucleoprotein (H/ACA snoRNP), which catalyzes pseudouridylation of rRNA and is required for ribosome biogenesis. This involves the isomerization of uridine such that the ribose is subsequently attached to C5, instead of the normal N1. Pseudouridine ('psi') residues may serve to stabilize the conformation of rRNAs. The H/ACA snoRNP complex also mediates pseudouridylation of other types of RNAs. The H/ACA snoRNP complex mediates pseudouridylation at position 93 in U2 snRNA. Essential for growth. The polypeptide is H/ACA ribonucleoprotein complex subunit GAR1 (Saccharomyces cerevisiae (strain ATCC 204508 / S288c) (Baker's yeast)).